The primary structure comprises 687 residues: Solute carrier organic anion transporter family member 1B2 (687 aa).

Over 1–28 (MDHTQQSRKAAEAQPSRSKQTRFCDGFK) the chain is Cytoplasmic. Residues 29–48 (LFLAALSFSYICKALGGVVM) traverse the membrane as a helical segment. The Extracellular segment spans residues 49–67 (KSSITQIERRFDIPSSISG). The helical transmembrane segment at 68 to 88 (LIDGGFEIGNLLVIVFVSYFG) threads the bilayer. Residues 89–94 (SKLHRP) lie on the Cytoplasmic side of the membrane. A helical transmembrane segment spans residues 95–119 (KLIGIGCFIMGIGSILTALPHFFMG). The Extracellular segment spans residues 120–165 (YYKYAKENDIGSLGNSTLTCFINQMTSPTGPSPEIVEKGCEKGLKS). A glycan (N-linked (GlcNAc...) asparagine) is linked at Asn-134. Residues 166-194 (HMWIYVLMGNMLRGIGETPIVPLGISYLD) form a helical membrane-spanning segment. Over 195-213 (DFAKEGHTSMHLGTLHTIA) the chain is Cytoplasmic. Residues 214–234 (MIGPILGFIMSSVFAKIYVDV) form a helical membrane-spanning segment. Over 235–252 (GYVDLNSVRITPNDARWV) the chain is Extracellular. A helical transmembrane segment spans residues 253 to 277 (GAWWLSFIVNGLLCITSSIPFFFLP). At 278 to 328 (KIPKRSQEERKNSVSLHAPKTDEEKKHMTNLTKQEEQDPSNMTGFLRSLRS) the chain is on the cytoplasmic side. The tract at residues 286–311 (ERKNSVSLHAPKTDEEKKHMTNLTKQ) is disordered. 2 positions are modified to phosphoserine: Ser-290 and Ser-292. The helical transmembrane segment at 329-350 (ILTNEIYVIFLILTLLQVSGFI) threads the bilayer. The Extracellular segment spans residues 351 to 370 (GSFTYLFKFIEQQFGRTASQ). Residues 371-394 (ANFLLGIITIPTMATAMFLGGYIV) traverse the membrane as a helical segment. The Cytoplasmic portion of the chain corresponds to 395–398 (KKFK). A helical transmembrane segment spans residues 399 to 422 (LTSVGIAKFVFFTSSVAYAFQFLY). Residues 423-531 (FPLLCENKPF…YKCKTNYYFY (109 aa)) are Extracellular-facing. A Kazal-like domain is found at 450–507 (DVPLSYCNSDCSCDKNQWEPICGENGVTYISPCLAGCKSFRGDKKPNNTEFYDCSCIS). Disulfide bonds link Cys-456/Cys-486, Cys-462/Cys-482, and Cys-471/Cys-505. Asn-496 and Asn-511 each carry an N-linked (GlcNAc...) asparagine glycan. The helical transmembrane segment at 532-554 (IILQVTVSFFTAMGSPSLILILM) threads the bilayer. The Cytoplasmic segment spans residues 555–563 (KSVQPELKS). Residues 564 to 589 (LAMGFHSLIIRALGGILAPIYYGAFI) traverse the membrane as a helical segment. Residues 590–623 (DRTCIKWSVTSCGKRGACRLYNSRLFGFSYLGLN) are Extracellular-facing. Residues 624-641 (LALKTPPLFLYVVLIYFT) traverse the membrane as a helical segment. Residues 642-687 (KRKYKRNDNKTLENGRQFTDEGNPDSVNKNGYYCVPYDEQSNETPL) are Cytoplasmic-facing. Phosphothreonine is present on Thr-660. Residue Ser-667 is modified to Phosphoserine.

This sequence belongs to the organo anion transporter (TC 2.A.60) family. Liver specific. Expression is highest in central perivenous hepatocytes and lowest in the periportal region. Isoform 1 predominates. Not detected in heart, brain, kidney, skeletal muscle, lung, testis or spleen.

It is found in the basolateral cell membrane. The catalysed reaction is estrone 3-sulfate(out) = estrone 3-sulfate(in). It catalyses the reaction taurocholate(out) = taurocholate(in). It carries out the reaction prostaglandin E2(out) = prostaglandin E2(in). The enzyme catalyses L-thyroxine(out) = L-thyroxine(in). Mediates the Na(+)-independent uptake of organic anions such as taurochlate, bromosulfophthalein and steroid conjugates (estrone 3-sulfate, 17-beta-glucuronosyl estradiol, dehydroepiandrosterone sulfate). Also transports prostaglandin E2 and L-thyroxine (T4). Shows a pH-sensitive substrate specificity which may be ascribed to the protonation state of the binding site and leads to a stimulation of substrate transport in an acidic microenvironment. Hydrogencarbonate/HCO3(-) acts as the probable counteranion that exchanges for organic anions. The chain is Solute carrier organic anion transporter family member 1B2 (Slco1b2) from Rattus norvegicus (Rat).